Here is a 509-residue protein sequence, read N- to C-terminus: Steroid 17-alpha-hydroxylase/17,20 lyase (509 aa).

Cys445 serves as a coordination point for heme.

The protein belongs to the cytochrome P450 family. Requires heme as cofactor.

It is found in the membrane. The enzyme catalyses a C21-steroid + reduced [NADPH--hemoprotein reductase] + O2 = a 17alpha-hydroxy-C21-steroid + oxidized [NADPH--hemoprotein reductase] + H2O + H(+). The catalysed reaction is 17alpha-hydroxyprogesterone + reduced [NADPH--hemoprotein reductase] + O2 = androst-4-ene-3,17-dione + acetate + oxidized [NADPH--hemoprotein reductase] + H2O + 2 H(+). It carries out the reaction 17alpha-hydroxypregnenolone + reduced [NADPH--hemoprotein reductase] + O2 = 3beta-hydroxyandrost-5-en-17-one + acetate + oxidized [NADPH--hemoprotein reductase] + H2O + 2 H(+). The protein operates within lipid metabolism; steroid biosynthesis. In terms of biological role, conversion of pregnenolone and progesterone to their 17-alpha-hydroxylated products and subsequently to dehydroepiandrosterone (DHEA) and androstenedione. Catalyzes both the 17-alpha-hydroxylation and the 17,20-lyase reaction. The protein is Steroid 17-alpha-hydroxylase/17,20 lyase (CYP17A1) of Squalus acanthias (Spiny dogfish).